The sequence spans 160 residues: Conopressin/conophysin, isoform 2 (160 aa).

Residues 1 to 30 (MKCSVLQMSRLSWAMCLMLLMLLLLGTAQG) form the signal peptide. C31 and C36 are disulfide-bonded. Glycine amide is present on G39. A propeptide spanning residues 40–47 (GKRAVDAL) is cleaved from the precursor. 7 disulfide bridges follow: C53–C97, C56–C70, C64–C87, C71–C77, C104–C118, C112–C130, and C119–C124.

This sequence belongs to the vasopressin/oxytocin family. Expressed by the venom gland.

It is found in the secreted. Its function is as follows. Targets vasopressin-oxytocin related receptors. This is Conopressin/conophysin, isoform 2 from Conus monile (Necklace cone).